The sequence spans 432 residues: Adenylosuccinate synthetase (432 aa).

GTP contacts are provided by residues 13–19 (GDEGKGK) and 41–43 (GHT). The active-site Proton acceptor is the aspartate 14. 2 residues coordinate Mg(2+): aspartate 14 and glycine 41. Residues 14–17 (DEGK), 39–42 (NAGH), threonine 130, arginine 144, glutamine 225, threonine 240, and arginine 304 contribute to the IMP site. Histidine 42 acts as the Proton donor in catalysis. 300 to 306 (AVTGRPR) contributes to the substrate binding site. GTP contacts are provided by residues arginine 306, 332–334 (KLD), and 415–417 (STG).

It belongs to the adenylosuccinate synthetase family. In terms of assembly, homodimer. Mg(2+) serves as cofactor.

It localises to the cytoplasm. It catalyses the reaction IMP + L-aspartate + GTP = N(6)-(1,2-dicarboxyethyl)-AMP + GDP + phosphate + 2 H(+). It participates in purine metabolism; AMP biosynthesis via de novo pathway; AMP from IMP: step 1/2. Its function is as follows. Plays an important role in the de novo pathway of purine nucleotide biosynthesis. Catalyzes the first committed step in the biosynthesis of AMP from IMP. The protein is Adenylosuccinate synthetase of Pasteurella multocida (strain Pm70).